Consider the following 321-residue polypeptide: MTKYALVGDVGGTNARLALCDIASGEISQAKTYSGLDYPSLEAVIRVYLEEHNVEVQDGCIAIACPITGDWVAMTNHTWAFSIAEMKKNLGFSHLEIINDFTAVSMAIPMLKKEHLIQFGGAEPVEGKPIAVYGAGTGLGVAHLVHVDKRWVSLPGEGGHVDFAPNSEEEGIILEILRAEIGHVSAERVLSGPGLVNLYRAIVKADNRLPENLKPKDITERALADSCTDCRRALSLFCVIMGRFGGNLALTLGTFGGVYIAGGIVPRFLEFFKASGFRAAFEDKGRFKEYVHDIPVYLIVHDNPGLLGSGAHLRQTLGHIL.

An ATP-binding site is contributed by Gly-8 to Thr-13.

This sequence belongs to the bacterial glucokinase family.

The protein resides in the cytoplasm. The catalysed reaction is D-glucose + ATP = D-glucose 6-phosphate + ADP + H(+). This is Glucokinase from Escherichia fergusonii (strain ATCC 35469 / DSM 13698 / CCUG 18766 / IAM 14443 / JCM 21226 / LMG 7866 / NBRC 102419 / NCTC 12128 / CDC 0568-73).